The primary structure comprises 173 residues: Photosystem I assembly protein Ycf3 (173 aa).

TPR repeat units lie at residues 35 to 68 (AFSY…EEDP), 72 to 105 (SYIL…NFKL), and 120 to 153 (GVQA…APDN).

This sequence belongs to the Ycf3 family.

Its subcellular location is the plastid. The protein localises to the chloroplast thylakoid membrane. Its function is as follows. Essential for the assembly of the photosystem I (PSI) complex. May act as a chaperone-like factor to guide the assembly of the PSI subunits. This Pyropia yezoensis (Susabi-nori) protein is Photosystem I assembly protein Ycf3.